The following is a 460-amino-acid chain: Bifunctional protein GlmU (460 aa).

The interval 1 to 235 (MTLTAAIVLA…PLSVEGVNDR (235 aa)) is pyrophosphorylase. Residues 9 to 12 (LAAG), Lys-23, Gln-76, and 81 to 82 (GT) each bind UDP-N-acetyl-alpha-D-glucosamine. Residue Asp-109 coordinates Mg(2+). UDP-N-acetyl-alpha-D-glucosamine is bound by residues Gly-146, Glu-161, Asn-176, and Asn-233. Residue Asn-233 coordinates Mg(2+). The linker stretch occupies residues 236–256 (VQLASLAKAHNLRVCRQWMLD). The segment at 257–460 (GVTIVDPQTT…VDNWKPAWER (204 aa)) is N-acetyltransferase. UDP-N-acetyl-alpha-D-glucosamine is bound by residues Arg-338 and Lys-356. His-368 serves as the catalytic Proton acceptor. UDP-N-acetyl-alpha-D-glucosamine-binding residues include Tyr-371 and Asn-382. Residues 391-392 (NY) and Ala-428 contribute to the acetyl-CoA site.

In the N-terminal section; belongs to the N-acetylglucosamine-1-phosphate uridyltransferase family. The protein in the C-terminal section; belongs to the transferase hexapeptide repeat family. As to quaternary structure, homotrimer. Mg(2+) is required as a cofactor.

The protein resides in the cytoplasm. The enzyme catalyses alpha-D-glucosamine 1-phosphate + acetyl-CoA = N-acetyl-alpha-D-glucosamine 1-phosphate + CoA + H(+). The catalysed reaction is N-acetyl-alpha-D-glucosamine 1-phosphate + UTP + H(+) = UDP-N-acetyl-alpha-D-glucosamine + diphosphate. It functions in the pathway nucleotide-sugar biosynthesis; UDP-N-acetyl-alpha-D-glucosamine biosynthesis; N-acetyl-alpha-D-glucosamine 1-phosphate from alpha-D-glucosamine 6-phosphate (route II): step 2/2. Its pathway is nucleotide-sugar biosynthesis; UDP-N-acetyl-alpha-D-glucosamine biosynthesis; UDP-N-acetyl-alpha-D-glucosamine from N-acetyl-alpha-D-glucosamine 1-phosphate: step 1/1. It participates in bacterial outer membrane biogenesis; LPS lipid A biosynthesis. Catalyzes the last two sequential reactions in the de novo biosynthetic pathway for UDP-N-acetylglucosamine (UDP-GlcNAc). The C-terminal domain catalyzes the transfer of acetyl group from acetyl coenzyme A to glucosamine-1-phosphate (GlcN-1-P) to produce N-acetylglucosamine-1-phosphate (GlcNAc-1-P), which is converted into UDP-GlcNAc by the transfer of uridine 5-monophosphate (from uridine 5-triphosphate), a reaction catalyzed by the N-terminal domain. The chain is Bifunctional protein GlmU from Bifidobacterium animalis subsp. lactis (strain AD011).